The primary structure comprises 465 residues: Cysteine--tRNA ligase (465 aa).

Cys-28 contacts Zn(2+). The short motif at 30–40 (PTVYNYIHIGN) is the 'HIGH' region element. Zn(2+) is bound by residues Cys-208, His-233, and Glu-237. A 'KMSKS' region motif is present at residues 265 to 269 (KMSKS). Position 268 (Lys-268) interacts with ATP.

This sequence belongs to the class-I aminoacyl-tRNA synthetase family. As to quaternary structure, monomer. It depends on Zn(2+) as a cofactor.

It is found in the cytoplasm. The catalysed reaction is tRNA(Cys) + L-cysteine + ATP = L-cysteinyl-tRNA(Cys) + AMP + diphosphate. This is Cysteine--tRNA ligase from Exiguobacterium sibiricum (strain DSM 17290 / CCUG 55495 / CIP 109462 / JCM 13490 / 255-15).